The primary structure comprises 950 residues: Translation initiation factor IF-2 (950 aa).

Composition is skewed to basic and acidic residues over residues 128–156 (KPKVAEPVKKSEPKAAAKAEETKVEKVEA), 165–186 (AEVKTENVADKKEPVVTEEKKK), 200–234 (KRAEDIKKEQAAARPEKKKFDKNRNDRNNRNDNRR), and 291–312 (NRRDRDRKKTDSNRDNTKDGNR). Positions 128-352 (KPKVAEPVKK…YQNNQSSNVP (225 aa)) are disordered. 2 stretches are compositionally biased toward polar residues: residues 322 to 336 (NRNQVRNARNSNWNQ) and 343 to 352 (YQNNQSSNVP). A tr-type G domain is found at 448-619 (ERPAVVTIMG…LLVAEVQELK (172 aa)). A G1 region spans residues 457 to 464 (GHVDHGKT). Position 457–464 (457–464 (GHVDHGKT)) interacts with GTP. The segment at 482–486 (GITQH) is G2. Positions 503 to 506 (DTPG) are G3. GTP-binding positions include 503–507 (DTPGH) and 557–560 (NKLD). Residues 557–560 (NKLD) are G4. Residues 595–597 (SAK) are G5.

Belongs to the TRAFAC class translation factor GTPase superfamily. Classic translation factor GTPase family. IF-2 subfamily.

It is found in the cytoplasm. One of the essential components for the initiation of protein synthesis. Protects formylmethionyl-tRNA from spontaneous hydrolysis and promotes its binding to the 30S ribosomal subunits. Also involved in the hydrolysis of GTP during the formation of the 70S ribosomal complex. The protein is Translation initiation factor IF-2 (infB) of Lactococcus lactis subsp. cremoris (Streptococcus cremoris).